We begin with the raw amino-acid sequence, 385 residues long: Cytochrome b (385 aa).

The next 4 helical transmembrane spans lie at 32-52 (FGSL…TLAM), 76-98 (WLIR…LHIG), 113-133 (AWIL…LGYV), and 179-199 (FFAL…MHLI). Residues His82 and His96 each contribute to the heme b site. 2 residues coordinate heme b: His183 and His197. His202 serves as a coordination point for a ubiquinone. Helical transmembrane passes span 226-246 (YLFK…IFVF), 290-310 (LLGV…PKTD), 322-342 (LSKI…QLGA), and 349-369 (FIEF…IIMP).

This sequence belongs to the cytochrome b family. In terms of assembly, fungal cytochrome b-c1 complex contains 10 subunits; 3 respiratory subunits, 2 core proteins and 5 low-molecular weight proteins. Cytochrome b-c1 complex is a homodimer. It depends on heme b as a cofactor.

It localises to the mitochondrion inner membrane. Its function is as follows. Component of the ubiquinol-cytochrome c reductase complex (complex III or cytochrome b-c1 complex) that is part of the mitochondrial respiratory chain. The b-c1 complex mediates electron transfer from ubiquinol to cytochrome c. Contributes to the generation of a proton gradient across the mitochondrial membrane that is then used for ATP synthesis. This is Cytochrome b (cob) from Akanthomyces muscarius (Entomopathogenic fungus).